The following is a 376-amino-acid chain: MKALLVLEDGFTLEGKSFTGDFETGGEVIFTTGMTGYQEILTDPSYYGQMVCMTYPLIGNYGTCREDMESAGVHCAALLVKECCKKPSNWRSTMSLPEFMKRYEKPGVEGLDTRALTRHLRMNGAMRGIISTRETDPAVLQERARALPAMKGHNLVPFVAPEKPYAWYDNAVQEVTVAEDGSYAWRGTGLPLLVYDFGIKWNILRRLCEAGFEPLAVPPGFSPARAKASGAKGVFLSNGPGDPATLTSEIALVRELIHMLPVTGICLGHQLIGHALGARTEKLKFGHHGCNHPVKDLTTGRIEISSQNHGFHVVLDDVDDVEATHVNLNDQTLEGLRHKTLPVMSLQYHPEAAAGPHDGEYLFNRFRKIIGESAGA.

The tract at residues 1-187 (MKALLVLEDG…AEDGSYAWRG (187 aa)) is CPSase. Positions 45, 239, and 241 each coordinate L-glutamine. Residues 191–376 (PLLVYDFGIK…RKIIGESAGA (186 aa)) form the Glutamine amidotransferase type-1 domain. The Nucleophile role is filled by C266. L-glutamine-binding residues include L267, Q270, N308, G310, and F311. Residues H349 and E351 contribute to the active site.

It belongs to the CarA family. As to quaternary structure, composed of two chains; the small (or glutamine) chain promotes the hydrolysis of glutamine to ammonia, which is used by the large (or ammonia) chain to synthesize carbamoyl phosphate. Tetramer of heterodimers (alpha,beta)4.

The enzyme catalyses hydrogencarbonate + L-glutamine + 2 ATP + H2O = carbamoyl phosphate + L-glutamate + 2 ADP + phosphate + 2 H(+). It catalyses the reaction L-glutamine + H2O = L-glutamate + NH4(+). It functions in the pathway amino-acid biosynthesis; L-arginine biosynthesis; carbamoyl phosphate from bicarbonate: step 1/1. It participates in pyrimidine metabolism; UMP biosynthesis via de novo pathway; (S)-dihydroorotate from bicarbonate: step 1/3. Small subunit of the glutamine-dependent carbamoyl phosphate synthetase (CPSase). CPSase catalyzes the formation of carbamoyl phosphate from the ammonia moiety of glutamine, carbonate, and phosphate donated by ATP, constituting the first step of 2 biosynthetic pathways, one leading to arginine and/or urea and the other to pyrimidine nucleotides. The small subunit (glutamine amidotransferase) binds and cleaves glutamine to supply the large subunit with the substrate ammonia. This is Carbamoyl phosphate synthase small chain from Desulfovibrio desulfuricans (strain ATCC 27774 / DSM 6949 / MB).